A 49-amino-acid chain; its full sequence is Small, acid-soluble spore protein O (49 aa).

The segment at M1–Q49 is disordered. Residues H8–G20 are compositionally biased toward polar residues.

The protein belongs to the SspO family.

Its subcellular location is the spore core. The chain is Small, acid-soluble spore protein O from Bacillus cereus (strain G9842).